A 416-amino-acid chain; its full sequence is MKSYLVGGAVRDALLGQPAGDCDWVVVGADPAHMKSLGFKPVGRDFPVFLHPKTGEEFALARTERKNGHGYRGFIVNADPTVTLEQDLQRRDFTINAIARDQTNGTLIDPYGGVNDLEQRVLRHISPAFAEDPLRVLRAARFMARLAPLGFSIAPETLAMMRQMAANGELNSLIPERIWKELSRSLTYTQPAAFLHTLRTVNALEVVLPELNALYGVPQHADYHPEIDTGLHQELVSDIAAKLAPGDMLIGFAALCHDLGKALTPRATWPHHPMHEQRGMAPTQQLSERLKVPRNYQQLALIACREHLNVHRLSKLHDNTVYELLQRCDAFRRPERIAQLAIVCEADYRGRYGHEDANYPQGQHLCRLHAAALAINARDLNRQDLHGTQIGEALAQARIRAISSAGVYDGGTGTNF.

Gly8 and Arg11 together coordinate ATP. 2 residues coordinate CTP: Gly8 and Arg11. Mg(2+)-binding residues include Asp21 and Asp23. Positions 91, 138, and 141 each coordinate ATP. The CTP site is built by Arg91, Arg138, and Arg141. In terms of domain architecture, HD spans 229 to 331 (TGLHQELVSD…YELLQRCDAF (103 aa)).

It belongs to the tRNA nucleotidyltransferase/poly(A) polymerase family. Bacterial CCA-adding enzyme type 1 subfamily. As to quaternary structure, monomer. Can also form homodimers and oligomers. Mg(2+) is required as a cofactor. Ni(2+) serves as cofactor.

The catalysed reaction is a tRNA precursor + 2 CTP + ATP = a tRNA with a 3' CCA end + 3 diphosphate. It carries out the reaction a tRNA with a 3' CCA end + 2 CTP + ATP = a tRNA with a 3' CCACCA end + 3 diphosphate. Its function is as follows. Catalyzes the addition and repair of the essential 3'-terminal CCA sequence in tRNAs without using a nucleic acid template. Adds these three nucleotides in the order of C, C, and A to the tRNA nucleotide-73, using CTP and ATP as substrates and producing inorganic pyrophosphate. tRNA 3'-terminal CCA addition is required both for tRNA processing and repair. Also involved in tRNA surveillance by mediating tandem CCA addition to generate a CCACCA at the 3' terminus of unstable tRNAs. While stable tRNAs receive only 3'-terminal CCA, unstable tRNAs are marked with CCACCA and rapidly degraded. This is Multifunctional CCA protein from Xylella fastidiosa (strain M23).